We begin with the raw amino-acid sequence, 83 residues long: Exodeoxyribonuclease 7 small subunit (83 aa).

The protein belongs to the XseB family. As to quaternary structure, heterooligomer composed of large and small subunits.

Its subcellular location is the cytoplasm. It carries out the reaction Exonucleolytic cleavage in either 5'- to 3'- or 3'- to 5'-direction to yield nucleoside 5'-phosphates.. Functionally, bidirectionally degrades single-stranded DNA into large acid-insoluble oligonucleotides, which are then degraded further into small acid-soluble oligonucleotides. The protein is Exodeoxyribonuclease 7 small subunit of Novosphingobium aromaticivorans (strain ATCC 700278 / DSM 12444 / CCUG 56034 / CIP 105152 / NBRC 16084 / F199).